The following is a 672-amino-acid chain: UvrABC system protein B (672 aa).

A Helicase ATP-binding domain is found at 26–181 (AGLEDGLAYQ…ILQRLAELQY (156 aa)). 39–46 (GVTGSGKT) contacts ATP. A Beta-hairpin motif is present at residues 92 to 115 (YYDYYQPEAYVPSSDTYIEKDASI). The Helicase C-terminal domain maps to 430-592 (QVDDLLSEIK…ITPKSIQKAV (163 aa)). In terms of domain architecture, UVR spans 631-666 (AKELRKLEEQMYHHARNLEFEEAAAVRDKIQHIRKG).

Belongs to the UvrB family. As to quaternary structure, forms a heterotetramer with UvrA during the search for lesions. Interacts with UvrC in an incision complex.

The protein localises to the cytoplasm. Its function is as follows. The UvrABC repair system catalyzes the recognition and processing of DNA lesions. A damage recognition complex composed of 2 UvrA and 2 UvrB subunits scans DNA for abnormalities. Upon binding of the UvrA(2)B(2) complex to a putative damaged site, the DNA wraps around one UvrB monomer. DNA wrap is dependent on ATP binding by UvrB and probably causes local melting of the DNA helix, facilitating insertion of UvrB beta-hairpin between the DNA strands. Then UvrB probes one DNA strand for the presence of a lesion. If a lesion is found the UvrA subunits dissociate and the UvrB-DNA preincision complex is formed. This complex is subsequently bound by UvrC and the second UvrB is released. If no lesion is found, the DNA wraps around the other UvrB subunit that will check the other stand for damage. This Coxiella burnetii (strain Dugway 5J108-111) protein is UvrABC system protein B.